A 212-amino-acid chain; its full sequence is NADH dehydrogenase [ubiquinone] iron-sulfur protein 8, mitochondrial (212 aa).

The transit peptide at 1–34 (MYRLSSSMLPRALAQAMRTGHLNGQSLHSSAVAA) directs the protein to the mitochondrion. 2 4Fe-4S ferredoxin-type domains span residues 104-133 (RRYPSGEERCIACKLCEAICPAQAITIEAE) and 143-172 (TRYDIDMTKCIYCGFCQEACPVDAIVEGPN). 8 residues coordinate [4Fe-4S] cluster: cysteine 113, cysteine 116, cysteine 119, cysteine 123, cysteine 152, cysteine 155, cysteine 158, and cysteine 162.

The protein belongs to the complex I 23 kDa subunit family. In terms of assembly, complex I is composed of 45 different subunits. This is a component of the iron-sulfur (IP) fragment of the enzyme. Interacts with RAB5IF. [4Fe-4S] cluster is required as a cofactor.

The protein resides in the mitochondrion inner membrane. It carries out the reaction a ubiquinone + NADH + 5 H(+)(in) = a ubiquinol + NAD(+) + 4 H(+)(out). Functionally, core subunit of the mitochondrial membrane respiratory chain NADH dehydrogenase (Complex I) which catalyzes electron transfer from NADH through the respiratory chain, using ubiquinone as an electron acceptor. Essential for the catalytic activity and assembly of complex I. In Mus musculus (Mouse), this protein is NADH dehydrogenase [ubiquinone] iron-sulfur protein 8, mitochondrial (Ndufs8).